Here is a 1234-residue protein sequence, read N- to C-terminus: ATP-dependent helicase/nuclease subunit A (1234 aa).

One can recognise a UvrD-like helicase ATP-binding domain in the interval 2 to 475 (TQFTTSQQAA…IILAENFRST (474 aa)). 23–30 (ASAGSGKT) lines the ATP pocket. Residues 507–806 (YGALDYGDAH…KLMTIHKSKG (300 aa)) form the UvrD-like helicase C-terminal domain.

The protein belongs to the helicase family. AddA subfamily. Heterodimer of AddA and AddB/RexB. Mg(2+) is required as a cofactor.

It catalyses the reaction Couples ATP hydrolysis with the unwinding of duplex DNA by translocating in the 3'-5' direction.. The enzyme catalyses ATP + H2O = ADP + phosphate + H(+). Functionally, the heterodimer acts as both an ATP-dependent DNA helicase and an ATP-dependent, dual-direction single-stranded exonuclease. Recognizes the chi site generating a DNA molecule suitable for the initiation of homologous recombination. The AddA nuclease domain is required for chi fragment generation; this subunit has the helicase and 3' -&gt; 5' nuclease activities. The polypeptide is ATP-dependent helicase/nuclease subunit A (Lacticaseibacillus paracasei (strain ATCC 334 / BCRC 17002 / CCUG 31169 / CIP 107868 / KCTC 3260 / NRRL B-441) (Lactobacillus paracasei)).